The chain runs to 282 residues: Putative hydrolase BamMC406_5393 (282 aa).

Glutamate 124, glutamate 126, and aspartate 155 together coordinate Mg(2+).

The protein belongs to the FAH family. Mg(2+) serves as cofactor.

The polypeptide is Putative hydrolase BamMC406_5393 (Burkholderia ambifaria (strain MC40-6)).